The sequence spans 87 residues: uncharacterized protein (87 aa).

A 2Fe-2S ferredoxin-type domain is found at 4 to 87; the sequence is SIIEITNIKK…KPKGNITIKI (84 aa). Residues Cys-38, Cys-43, Cys-46, and Cys-75 each contribute to the [2Fe-2S] cluster site.

It depends on [2Fe-2S] cluster as a cofactor.

This is an uncharacterized protein from Buchnera aphidicola subsp. Acyrthosiphon pisum (strain APS) (Acyrthosiphon pisum symbiotic bacterium).